The chain runs to 2489 residues: Protein YPR117W (2489 aa).

Helical transmembrane passes span 19-39 (FMLFIISIQKIASILMSWILM) and 128-148 (VLSILKLVFSFSTFFHTLALT). Asn191, Asn210, Asn311, Asn452, Asn468, Asn605, Asn638, Asn663, Asn698, Asn789, Asn835, Asn981, Asn1255, Asn1404, and Asn1476 each carry an N-linked (GlcNAc...) asparagine glycan. The stretch at 1610–1676 (LTQEKLATER…RLHTVNTILS (67 aa)) forms a coiled coil. A disordered region spans residues 1685 to 1704 (PGGNTDGDSSSSLSDTDVNL). Residues 1690–1704 (DGDSSSSLSDTDVNL) show a composition bias toward low complexity. 2 N-linked (GlcNAc...) asparagine glycosylation sites follow: Asn1978 and Asn2189. Ser2254 and Ser2278 each carry phosphoserine. N-linked (GlcNAc...) asparagine glycosylation occurs at Asn2279. A compositionally biased stretch (polar residues) spans 2451-2471 (SSTHSSDIRSINSDETYNEND). The disordered stretch occupies residues 2451-2489 (SSTHSSDIRSINSDETYNENDGNGVKPFYPVTSEFSKNK).

The protein resides in the cell membrane. It is found in the endoplasmic reticulum membrane. The protein localises to the mitochondrion membrane. Functionally, tube-forming lipid transport protein which may bind to phosphatidylinositols and may affect phosphatidylinositol-4,5-bisphosphate (PtdIns-4,5-P2) distribution. This Saccharomyces cerevisiae (strain ATCC 204508 / S288c) (Baker's yeast) protein is Protein YPR117W.